The chain runs to 687 residues: Pentatricopeptide repeat-containing protein At3g09060 (687 aa).

PPR repeat units follow at residues 42-76 (SAVVYHHILRRLSETRMVNHVSRIVELIRSQECKC), 77-107 (DEDVALSVIKTYGKNSMPDQALDVFKRMREI), 113-147 (AIRSYNTLLNAFVEAKQWVKVESLFAYFETAGVAP), 148-182 (NLQTYNVLIKMSCKKKEFEKARGFLDWMWKEGFKP), 183-217 (DVFSYSTVINDLAKAGKLDDALELFDEMSERGVAP), 218-253 (DVTCYNILIDGFLKEKDHKTAMELWDRLLEDSSVYP), 254-288 (NVKTHNIMISGLSKCGRVDDCLKIWERMKQNEREK), 289-323 (DLYTYSSLIHGLCDAGNVDKAESVFNELDERKASI), 324-358 (DVVTYNTMLGGFCRCGKIKESLELWRIMEHKNSVN), 359-392 (IVSYNILIKGLLENGKIDEATMIWRLMPAKGYAA), 393-427 (DKTTYGIFIHGLCVNGYVNKALGVMQEVESSGGHL), 428-462 (DVYAYASIIDCLCKKKRLEEASNLVKEMSKHGVEL), 463-497 (NSHVCNALIGGLIRDSRLGEASFFLREMGKNGCRP), 498-532 (TVVSYNILICGLCKAGKFGEASAFVKEMLENGWKP), 533-567 (DLKTYSILLCGLCRDRKIDLALELWHQFLQSGLET), 568-602 (DVMMHNILIHGLCSVGKLDDAMTVMANMEHRNCTA), 603-637 (NLVTYNTLMEGFFKVGDSNRATVIWGYMYKMGLQP), and 638-672 (DIISYNTIMKGLCMCRGVSYAMEFFDDARNHGIFP).

It belongs to the PPR family. P subfamily.

This chain is Pentatricopeptide repeat-containing protein At3g09060, found in Arabidopsis thaliana (Mouse-ear cress).